The sequence spans 314 residues: Fibrinogen-like protein 1 (314 aa).

Positions 1 to 22 are cleaved as a signal peptide; the sequence is MGKIYSFVLVAIALMMGREGWA. Residues 28 to 62 adopt a coiled-coil conformation; sequence CLREQVRLRAQVHQLETRVKQQQTMIAQLLHEKEV. The Fibrinogen C-terminal domain occupies 76-308; the sequence is LGGKRQYADC…SVVMKIRPSD (233 aa). Intrachain disulfides connect Cys-85-Cys-114 and Cys-250-Cys-263.

In terms of assembly, homodimer. Interacts (via the Fibrinogen C-terminal domain) with LAG3 (via Ig-like domains 1 and 2). Mainly expressed in liver. Also expressed in brown adipose tissue.

The protein localises to the secreted. Its function is as follows. Immune suppressive molecule that inhibits antigen-specific T-cell activation by acting as a major ligand of LAG3. Responsible for LAG3 T-cell inhibitory function. Binds LAG3 independently from MHC class II (MHC-II). Secreted by, and promotes growth of, hepatocytes. This Mus musculus (Mouse) protein is Fibrinogen-like protein 1 (Fgl1).